The chain runs to 144 residues: Grifin (144 aa).

Residues 5 to 133 (FEAFCAGGLA…EHRLAQVELA (129 aa)) form the Galectin domain. Position 138 is a phosphoserine (S138).

Homodimer.

This Mus musculus (Mouse) protein is Grifin (Grifin).